An 81-amino-acid chain; its full sequence is Sulfur carrier protein TusA (81 aa).

The active-site Cysteine persulfide intermediate is Cys19.

The protein belongs to the sulfur carrier protein TusA family.

The protein localises to the cytoplasm. Sulfur carrier protein which probably makes part of a sulfur-relay system. The protein is Sulfur carrier protein TusA of Shewanella woodyi (strain ATCC 51908 / MS32).